We begin with the raw amino-acid sequence, 209 residues long: Large ribosomal subunit protein uL3 (209 aa).

It belongs to the universal ribosomal protein uL3 family. Part of the 50S ribosomal subunit. Forms a cluster with proteins L14 and L19.

Functionally, one of the primary rRNA binding proteins, it binds directly near the 3'-end of the 23S rRNA, where it nucleates assembly of the 50S subunit. This Brevibacillus brevis (strain 47 / JCM 6285 / NBRC 100599) protein is Large ribosomal subunit protein uL3.